A 111-amino-acid polypeptide reads, in one-letter code: Cytochrome c6 (111 aa).

A signal peptide spans 1-25; it reads MKRLLSLIFLVFVFFAVMLTPPALA. Residues cysteine 39, cysteine 42, histidine 43, and methionine 83 each contribute to the heme c site.

Belongs to the cytochrome c family. PetJ subfamily. As to quaternary structure, monomer. Binds 1 heme c group covalently per subunit.

Its subcellular location is the cellular thylakoid lumen. Its function is as follows. Functions as an electron carrier between membrane-bound cytochrome b6-f and photosystem I in oxygenic photosynthesis. In Rippkaea orientalis (strain PCC 8801 / RF-1) (Cyanothece sp. (strain PCC 8801)), this protein is Cytochrome c6.